Consider the following 1043-residue polypeptide: Sucrose-phosphate synthase 1 (1043 aa).

Residues 95-117 are compositionally biased toward basic and acidic residues; it reads EEKEAQRLAKRRLEREKGRREAT. The disordered stretch occupies residues 95–127; sequence EEKEAQRLAKRRLEREKGRREATADMSEEFSEG. 4 positions are modified to phosphoserine: Ser121, Ser125, Ser152, and Ser155. The interval 670-693 is disordered; the sequence is PRHPQWQSDDGGDNSEPESPSDSL.

This sequence belongs to the glycosyltransferase 1 family. As to quaternary structure, homodimer or homotetramer. Post-translationally, phosphorylated at Ser-152 upon sucrose supply. In terms of tissue distribution, expressed in seeds, stems, rosette leaves, flowers and siliques. Highly expressed in maturing nectaries.

It carries out the reaction beta-D-fructose 6-phosphate + UDP-alpha-D-glucose = sucrose 6(F)-phosphate + UDP + H(+). It participates in glycan biosynthesis; sucrose biosynthesis; sucrose from D-fructose 6-phosphate and UDP-alpha-D-glucose: step 1/2. Its activity is regulated as follows. Activity is regulated by phosphorylation and moderated by concentration of metabolites and light. In terms of biological role, plays a major role in photosynthetic sucrose synthesis by catalyzing the rate-limiting step of sucrose biosynthesis from UDP-glucose and fructose- 6-phosphate. Involved in the regulation of carbon partitioning in the leaves of plants. May regulate the synthesis of sucrose and therefore play a major role as a limiting factor in the export of photoassimilates out of the leaf. Plays a role for sucrose availability that is essential for plant growth and fiber elongation. Required for nectar secretion. The polypeptide is Sucrose-phosphate synthase 1 (SPS1) (Arabidopsis thaliana (Mouse-ear cress)).